The following is a 1171-amino-acid chain: DNA-directed RNA polymerase subunit beta' (1171 aa).

4 residues coordinate Zn(2+): Cys60, Cys62, Cys75, and Cys78. Residues 299-319 (GRRGKPVTGPGNRPLKSLSDM) form a disordered region. Mg(2+)-binding residues include Asp449, Asp451, and Asp453. The Zn(2+) site is built by Cys790, Cys864, Cys871, and Cys874.

This sequence belongs to the RNA polymerase beta' chain family. As to quaternary structure, the RNAP catalytic core consists of 2 alpha, 1 beta, 1 beta' and 1 omega subunit. When a sigma factor is associated with the core the holoenzyme is formed, which can initiate transcription. It depends on Mg(2+) as a cofactor. Requires Zn(2+) as cofactor.

It catalyses the reaction RNA(n) + a ribonucleoside 5'-triphosphate = RNA(n+1) + diphosphate. In terms of biological role, DNA-dependent RNA polymerase catalyzes the transcription of DNA into RNA using the four ribonucleoside triphosphates as substrates. This Alkaliphilus metalliredigens (strain QYMF) protein is DNA-directed RNA polymerase subunit beta'.